The following is a 383-amino-acid chain: Chitinase-3-like protein 1 (383 aa).

An N-terminal signal peptide occupies residues 1-21 (MGLRAAHTGFVVLVLLQSCAA). The region spanning 22–383 (YKLICYYTSW…SAIKDVLARV (362 aa)) is the GH18 domain. Cysteine 26 and cysteine 51 are oxidised to a cystine. An N-linked (GlcNAc...) asparagine glycan is attached at asparagine 60. Chitin is bound by residues 70-71 (EW), 97-100 (GGWN), tyrosine 141, 204-207 (LTYD), and arginine 263. Cysteines 300 and 364 form a disulfide. The important for AKT1 activation and IL8 production stretch occupies residues 324-338 (QWVAYDDQESVKNKA). Tryptophan 352 is a binding site for chitin. A glycan (N-linked (GlcNAc...) asparagine) is linked at asparagine 367.

Belongs to the glycosyl hydrolase 18 family. As to quaternary structure, monomer. Post-translationally, glycosylated. In terms of tissue distribution, mammary secretions collected during the non-lactating period.

The protein localises to the secreted. The protein resides in the extracellular space. It is found in the cytoplasm. It localises to the perinuclear region. Its subcellular location is the endoplasmic reticulum. Functionally, carbohydrate-binding lectin with a preference for chitin. Has no chitinase activity. May play a role in tissue remodeling and in the capacity of cells to respond to and cope with changes in their environment. Plays a role in T-helper cell type 2 (Th2) inflammatory response and IL-13-induced inflammation, regulating allergen sensitization, inflammatory cell apoptosis, dendritic cell accumulation and M2 macrophage differentiation. Facilitates invasion of pathogenic enteric bacteria into colonic mucosa and lymphoid organs. Mediates activation of AKT1 signaling pathway and subsequent IL8 production in colonic epithelial cells. Regulates antibacterial responses in lung by contributing to macrophage bacterial killing, controlling bacterial dissemination and augmenting host tolerance. Also regulates hyperoxia-induced injury, inflammation and epithelial apoptosis in lung. This is Chitinase-3-like protein 1 (CHI3L1) from Bos taurus (Bovine).